Reading from the N-terminus, the 263-residue chain is 3'-5' ssDNA/RNA exonuclease TatD (263 aa).

A divalent metal cation is bound by residues Glu-91, His-127, and His-152.

It belongs to the metallo-dependent hydrolases superfamily. TatD-type hydrolase family. TatD subfamily. In terms of assembly, monomer. Mg(2+) is required as a cofactor.

It is found in the cytoplasm. Its function is as follows. 3'-5' exonuclease that prefers single-stranded DNA and RNA. May play a role in the H(2)O(2)-induced DNA damage repair. The sequence is that of 3'-5' ssDNA/RNA exonuclease TatD from Klebsiella pneumoniae (strain 342).